The sequence spans 691 residues: Leucine-rich repeat and WD repeat-containing protein 1 (691 aa).

LRR repeat units follow at residues 22–45 (DLKK…LFSQ), 48–69 (NLDE…LGLH), and 70–91 (NLRI…KQFP). The disordered stretch occupies residues 202-291 (GKKRDSADDC…QSNESSAKIN (90 aa)). Composition is skewed to polar residues over residues 255–264 (TSTQGTPSKS) and 276–291 (STPS…AKIN). WD repeat units follow at residues 426 to 466 (AHKK…CDYN), 476 to 516 (DTTS…KQGR), 535 to 574 (NDFH…KTRK), 593 to 632 (SSET…ADLQ), and 659 to 691 (VEKT…WKIK).

The protein belongs to the LRWD1 family. Component of the ORC complex.

The protein localises to the nucleus. It localises to the chromosome. Its subcellular location is the centromere. The protein resides in the telomere. It is found in the cytoplasm. The protein localises to the cytoskeleton. It localises to the microtubule organizing center. Its subcellular location is the centrosome. The protein resides in the kinetochore. Its function is as follows. Required for G1/S transition. Recruits and stabilizes the origin recognition complex (ORC) onto chromatin during G1 to establish pre-replication complex (preRC) and to heterochromatic sites in post-replicated cells. Binds a combination of DNA and histone methylation repressive marks on heterochromatin. Required for silencing of major satellite repeats. May be important ORC2, ORC3 and ORC4 stability. The polypeptide is Leucine-rich repeat and WD repeat-containing protein 1 (lrwd1) (Xenopus tropicalis (Western clawed frog)).